We begin with the raw amino-acid sequence, 257 residues long: Pyrroline-5-carboxylate reductase (257 aa).

This sequence belongs to the pyrroline-5-carboxylate reductase family.

Its subcellular location is the cytoplasm. It carries out the reaction L-proline + NADP(+) = (S)-1-pyrroline-5-carboxylate + NADPH + 2 H(+). It catalyses the reaction L-proline + NAD(+) = (S)-1-pyrroline-5-carboxylate + NADH + 2 H(+). Its pathway is amino-acid biosynthesis; L-proline biosynthesis; L-proline from L-glutamate 5-semialdehyde: step 1/1. In terms of biological role, catalyzes the reduction of 1-pyrroline-5-carboxylate (PCA) to L-proline. This chain is Pyrroline-5-carboxylate reductase, found in Helicobacter pylori (strain J99 / ATCC 700824) (Campylobacter pylori J99).